Consider the following 931-residue polypeptide: Netrin receptor UNC5C (931 aa).

The first 40 residues, 1-40 (MRKGLRATAARCGLGLGYLLQMLVLPALALLSASGTGSAA), serve as a signal peptide directing secretion. The Extracellular segment spans residues 41–380 (QDDDFFHELP…APDSDDVALY (340 aa)). An Ig-like domain is found at 62 to 159 (PHFLIEPEEA…AGTTKSRKAY (98 aa)). 9 disulfide bridges follow: Cys83-Cys144, Cys95-Cys142, Cys188-Cys239, Cys272-Cys309, Cys276-Cys313, Cys287-Cys299, Cys328-Cys362, Cys332-Cys367, and Cys340-Cys352. One can recognise an Ig-like C2-type domain in the interval 161–256 (RIAYLRKTFE…KRKSTTATVI (96 aa)). Asn236 carries an N-linked (GlcNAc...) asparagine glycan. TSP type-1 domains lie at 260–314 (NGGW…TLCP) and 316–368 (DGRW…GLCM). Residue Asn361 is glycosylated (N-linked (GlcNAc...) asparagine). Residues 381–401 (VGIVIAVTVCLAITVVVALFV) traverse the membrane as a helical segment. Residues 402–931 (YRKNHRDFES…VVSLAAEGQY (530 aa)) lie on the Cytoplasmic side of the membrane. A required for netrin-mediated axon repulsion of neuronal growth cones region spans residues 402 to 931 (YRKNHRDFES…VVSLAAEGQY (530 aa)). Ser502 bears the Phosphoserine mark. One can recognise a ZU5 domain in the interval 530–673 (CTAFGTFNSL…LSTYALVGQS (144 aa)). Tyr568 carries the phosphotyrosine modification. An interaction with DCC region spans residues 694-712 (SLEYSIRVYCLDDTQDALK). The Death domain maps to 850 to 929 (QKLCSSLDAP…ETVVSLAAEG (80 aa)).

It belongs to the unc-5 family. Interacts with DCC (via cytoplasmic domain). Interacts (tyrosine phosphorylated form) with PTPN11. Interacts (via extracellular domain) with FLRT3 (via extracellular domain). Interacts (via Ig-like C2-type domain) with DSCAM (via extracellular domain). Interacts (via death domain) with DAPK1. Interacts (via cytoplasmic domain) with TUBB3; this interaction is decreased by NTN1/Netrin-1. Post-translationally, proteolytically cleaved by caspases during apoptosis. The cleavage does not take place when the receptor is associated with netrin ligand. Its cleavage by caspases is required to induce apoptosis. In terms of processing, phosphorylated on different cytoplasmic tyrosine residues. Phosphorylation of Tyr-568 leads to an interaction with PTPN11 phosphatase, suggesting that its activity is regulated by phosphorylation/dephosphorylation. Tyrosine phosphorylation is netrin-dependent. Detected in brain (at protein level). Mainly expressed in brain. Also expressed in kidney. Not expressed in developing or adult lung.

It localises to the cell membrane. Its subcellular location is the cell surface. The protein localises to the synapse. The protein resides in the synaptosome. It is found in the cell projection. It localises to the axon. Its subcellular location is the dendrite. The protein localises to the growth cone. The protein resides in the lamellipodium. It is found in the filopodium. Its function is as follows. Receptor for netrin required for axon guidance. Mediates axon repulsion of neuronal growth cones in the developing nervous system upon ligand binding. NTN1/Netrin-1 binding might cause dissociation of UNC5C from polymerized TUBB3 in microtubules and thereby lead to increased microtubule dynamics and axon repulsion. Axon repulsion in growth cones may also be caused by its association with DCC that may trigger signaling for repulsion. Might also collaborate with DSCAM in NTN1-mediated axon repulsion independently of DCC. Also involved in corticospinal tract axon guidance independently of DCC. Involved in dorsal root ganglion axon projection towards the spinal cord. It also acts as a dependence receptor required for apoptosis induction when not associated with netrin ligand. This chain is Netrin receptor UNC5C (Unc5c), found in Rattus norvegicus (Rat).